The following is a 30-amino-acid chain: Cyclotide cter-F (30 aa).

Positions 1 to 30 form a cross-link, cyclopeptide (Gly-Asp); it reads GIPCGESCVFIPCISSVVGCSCKSKVCYLD. Intrachain disulfides connect C4–C20, C8–C22, and C13–C27.

In terms of processing, contains 3 disulfide bonds. This is a cyclic peptide.

Its function is as follows. Probably participates in a plant defense mechanism. This is Cyclotide cter-F from Clitoria ternatea (Butterfly pea).